We begin with the raw amino-acid sequence, 243 residues long: Uridylate kinase (243 aa).

12-15 (KLSG) is an ATP binding site. Gly-54 contributes to the UMP binding site. ATP contacts are provided by Gly-55 and Arg-59. 135–142 (TGNPYFTT) provides a ligand contact to UMP. ATP-binding residues include Asn-163, Tyr-169, and Asp-172.

Belongs to the UMP kinase family. Homohexamer.

Its subcellular location is the cytoplasm. It catalyses the reaction UMP + ATP = UDP + ADP. It participates in pyrimidine metabolism; CTP biosynthesis via de novo pathway; UDP from UMP (UMPK route): step 1/1. Its activity is regulated as follows. Inhibited by UTP. Functionally, catalyzes the reversible phosphorylation of UMP to UDP. This chain is Uridylate kinase, found in Roseiflexus sp. (strain RS-1).